We begin with the raw amino-acid sequence, 353 residues long: BLOC-1-related complex subunit 6 (353 aa).

The tract at residues 23-194 (AIFGDGPGQT…SGAGGGRRAT (172 aa)) is disordered. Positions 102-126 (FDLHGSSRRKDPEPPEAKPESERVC) are enriched in basic and acidic residues. Phosphoserine occurs at positions 130 and 166. The span at 172–191 (GACGGPASSGGAESGAGGGR) shows a compositional bias: gly residues. Threonine 194 carries the post-translational modification Phosphothreonine. Serine 197 carries the post-translational modification Phosphoserine. The tract at residues 225–253 (LSGAPQPPPPAPTRPCSAPTPTPAIPPID) is disordered. Positions 229-253 (PQPPPPAPTRPCSAPTPTPAIPPID) are enriched in pro residues.

This sequence belongs to the BORCS6 family. In terms of assembly, component of the BLOC-one-related complex (BORC) which is composed of BLOC1S1, BLOC1S2, BORCS5, BORCS6, BORCS7, BORCS8, KXD1 and SNAPIN.

It localises to the lysosome membrane. As part of the BORC complex may play a role in lysosomes movement and localization at the cell periphery. Associated with the cytosolic face of lysosomes, the BORC complex may recruit ARL8B and couple lysosomes to microtubule plus-end-directed kinesin motor. This Bos taurus (Bovine) protein is BLOC-1-related complex subunit 6.